Consider the following 307-residue polypeptide: UDP-3-O-acyl-N-acetylglucosamine deacetylase (307 aa).

3 residues coordinate Zn(2+): His78, His241, and Asp245. Catalysis depends on His268, which acts as the Proton donor.

This sequence belongs to the LpxC family. It depends on Zn(2+) as a cofactor.

It catalyses the reaction a UDP-3-O-[(3R)-3-hydroxyacyl]-N-acetyl-alpha-D-glucosamine + H2O = a UDP-3-O-[(3R)-3-hydroxyacyl]-alpha-D-glucosamine + acetate. The protein operates within glycolipid biosynthesis; lipid IV(A) biosynthesis; lipid IV(A) from (3R)-3-hydroxytetradecanoyl-[acyl-carrier-protein] and UDP-N-acetyl-alpha-D-glucosamine: step 2/6. Its function is as follows. Catalyzes the hydrolysis of UDP-3-O-myristoyl-N-acetylglucosamine to form UDP-3-O-myristoylglucosamine and acetate, the committed step in lipid A biosynthesis. The protein is UDP-3-O-acyl-N-acetylglucosamine deacetylase of Delftia acidovorans (strain DSM 14801 / SPH-1).